Reading from the N-terminus, the 703-residue chain is MKITLSSYEMELVRKKLAREPNEAEWLTIDALWSEHCSYKSSKVFLRSFPSEGEKVLMGIEDWQDAGALDVGDGWAIVLKLESHNHPSAIDPFNGAATGVGGIIRDIISKGAKPIALLDMIRVGNLSNPRNKWLLKNIIAGIGFYGNSIGVPVVGGELDFDDSYNDNPLVDVAGVGIVRKDKIVPSVVKEPGLKIVIVGLTGLDGLGGASFASRKLSGEDEIGAVQIADPFAGKIVLDVTLEIADKVEAIKDLGGGGLVVGVTEMANGLGAIVNLDKVPLRVKDLKPEEILVSETQERMLFAVKEENVNEVCKAFEYYDYPCAVIGEFVKEPYIKFLYGGKEIVSLPSDLLLSPPRFIWEIKKPKLIKSDKKPEVGLEESIRAILSRIISKEWAYSQFDYEVGTSTVLKPGEADSALISLPNGKLLALKGDANPDLCAEDSYECGKSIVAEAYRNLASVGAIGIGVVDHLQFGDPKKPEVYYSFVEAIRGIAEASKFFSTPIVGGKVSFYNENKEGKAIKPTPLIVMAGLIKDKFLRNKVVEDSYITLIGFTRDEMRGSLFGKIFGNYGEVPKARLNEDYLASQLVVNLINDEKIFFAKDINKGGLIASLFSILVKGMGVEIETSSIPSDTDDWIPKLYSENGGRFIVLTNDPEYIIRKSKGIHISVIGKITKDQGIIKIDNKEINVNKEIDNYYNYLYEVMS.

The active site involves His36. Residues Tyr39 and Lys80 each contribute to the ATP site. Glu82 is a Mg(2+) binding site. Substrate is bound by residues 83 to 86 (SHNH) and Arg105. His84 acts as the Proton acceptor in catalysis. Residue Asp106 coordinates Mg(2+). Gln226 contributes to the substrate binding site. Asp252 lines the Mg(2+) pocket. 294–296 (ETQ) is a substrate binding site. Residues Asp468 and Gly505 each coordinate ATP. Ser508 contributes to the substrate binding site.

The protein belongs to the FGAMS family. In terms of assembly, monomer. Part of the FGAM synthase complex composed of 1 PurL, 1 PurQ and 2 PurS subunits.

The protein localises to the cytoplasm. It carries out the reaction N(2)-formyl-N(1)-(5-phospho-beta-D-ribosyl)glycinamide + L-glutamine + ATP + H2O = 2-formamido-N(1)-(5-O-phospho-beta-D-ribosyl)acetamidine + L-glutamate + ADP + phosphate + H(+). It participates in purine metabolism; IMP biosynthesis via de novo pathway; 5-amino-1-(5-phospho-D-ribosyl)imidazole from N(2)-formyl-N(1)-(5-phospho-D-ribosyl)glycinamide: step 1/2. Functionally, part of the phosphoribosylformylglycinamidine synthase complex involved in the purines biosynthetic pathway. Catalyzes the ATP-dependent conversion of formylglycinamide ribonucleotide (FGAR) and glutamine to yield formylglycinamidine ribonucleotide (FGAM) and glutamate. The FGAM synthase complex is composed of three subunits. PurQ produces an ammonia molecule by converting glutamine to glutamate. PurL transfers the ammonia molecule to FGAR to form FGAM in an ATP-dependent manner. PurS interacts with PurQ and PurL and is thought to assist in the transfer of the ammonia molecule from PurQ to PurL. The chain is Phosphoribosylformylglycinamidine synthase subunit PurL from Sulfurisphaera tokodaii (strain DSM 16993 / JCM 10545 / NBRC 100140 / 7) (Sulfolobus tokodaii).